We begin with the raw amino-acid sequence, 246 residues long: UPF0246 protein stu1967 (246 aa).

This sequence belongs to the UPF0246 family.

This chain is UPF0246 protein stu1967, found in Streptococcus thermophilus (strain ATCC BAA-250 / LMG 18311).